The primary structure comprises 107 residues: Thiosulfate sulfurtransferase GlpE (107 aa).

In terms of domain architecture, Rhodanese spans 17–105 (RQGEAVLVDI…WLKAFPLETE (89 aa)). Cys-65 functions as the Cysteine persulfide intermediate in the catalytic mechanism.

It belongs to the GlpE family.

The protein localises to the cytoplasm. It catalyses the reaction thiosulfate + hydrogen cyanide = thiocyanate + sulfite + 2 H(+). It carries out the reaction thiosulfate + [thioredoxin]-dithiol = [thioredoxin]-disulfide + hydrogen sulfide + sulfite + 2 H(+). Transferase that catalyzes the transfer of sulfur from thiosulfate to thiophilic acceptors such as cyanide or dithiols. May function in a CysM-independent thiosulfate assimilation pathway by catalyzing the conversion of thiosulfate to sulfite, which can then be used for L-cysteine biosynthesis. In Sodalis glossinidius (strain morsitans), this protein is Thiosulfate sulfurtransferase GlpE.